Here is a 205-residue protein sequence, read N- to C-terminus: GTP cyclohydrolase-2 (205 aa).

49–53 (RVHSE) lines the GTP pocket. Zn(2+)-binding residues include Cys54, Cys65, and Cys67. GTP contacts are provided by residues Gln70, 92-94 (EGR), and Thr114. The active-site Proton acceptor is the Asp126. Arg128 acts as the Nucleophile in catalysis. The GTP site is built by Thr149 and Lys154.

It belongs to the GTP cyclohydrolase II family. Requires Zn(2+) as cofactor.

It carries out the reaction GTP + 4 H2O = 2,5-diamino-6-hydroxy-4-(5-phosphoribosylamino)-pyrimidine + formate + 2 phosphate + 3 H(+). The protein operates within cofactor biosynthesis; riboflavin biosynthesis; 5-amino-6-(D-ribitylamino)uracil from GTP: step 1/4. Catalyzes the conversion of GTP to 2,5-diamino-6-ribosylamino-4(3H)-pyrimidinone 5'-phosphate (DARP), formate and pyrophosphate. In Pseudomonas fluorescens (strain SBW25), this protein is GTP cyclohydrolase-2.